The primary structure comprises 235 residues: High mobility group protein 1.2 (235 aa).

Positions 1–34 are enriched in polar residues; it reads MNSGYSANIFPSSSSPTLYQSHQLQPNPSATMYQ. Positions 1 to 47 are disordered; it reads MNSGYSANIFPSSSSPTLYQSHQLQPNPSATMYQATPRDMGKPPVRG. DNA-binding regions (HMG box) lie at residues 47–117 and 135–203; these read GKTS…AAYG and PKRA…RNYK.

This sequence belongs to the HMGB family.

The protein resides in the nucleus. In Caenorhabditis elegans, this protein is High mobility group protein 1.2 (hmg-1.2).